The primary structure comprises 302 residues: Trans-4-hydroxy-L-proline dehydratase activating enzyme (302 aa).

Positions 14–297 (HDGPGIRSTV…KRLFEASNFN (284 aa)) constitute a Radical SAM core domain. [4Fe-4S] cluster is bound by residues cysteine 28, cysteine 32, cysteine 35, cysteine 54, cysteine 57, cysteine 60, and cysteine 93. Position 34 to 36 (34 to 36 (WCH)) interacts with S-adenosyl-L-methionine. 4Fe-4S ferredoxin-type domains lie at 45–74 (KQVL…KGET) and 75–103 (KICL…IVGQ). S-adenosyl-L-methionine contacts are provided by residues glycine 133, 183 to 185 (DIK), and histidine 257.

The protein belongs to the organic radical-activating enzymes family. [4Fe-4S] cluster is required as a cofactor.

It catalyses the reaction glycyl-[protein] + reduced [flavodoxin] + S-adenosyl-L-methionine = glycin-2-yl radical-[protein] + semiquinone [flavodoxin] + 5'-deoxyadenosine + L-methionine + H(+). Its function is as follows. Catalyzes activation of the trans-4-hydroxy-L-proline dehydratase under anaerobic conditions by generation of an organic free radical on a glycine residue, via a homolytic cleavage of S-adenosyl-L-methionine (SAM). Is involved in the anaerobic degradation of 4-hydroxyproline. The polypeptide is Trans-4-hydroxy-L-proline dehydratase activating enzyme (Clostridioides difficile (Peptoclostridium difficile)).